A 276-amino-acid polypeptide reads, in one-letter code: Homeobox-leucine zipper protein HOX11 (276 aa).

A disordered region spans residues 1–92 (MVDGHLEAST…DDGGSARKKL (92 aa)). The span at 39–48 (LSSSPNNSAG) shows a compositional bias: polar residues. Over residues 58-73 (HGLGGNDAAPGGGGGD) the composition is skewed to gly residues. A DNA-binding region (homeobox) is located at residues 87–146 (SARKKLRLSKEQSAFLEESFKEHSTLNPKQKLALAKQLNLRPRQVEVWFQNRRARTKLKQ). The segment at 145–189 (KQTEVDCEYLKRCCETLTEENRRLQKELAELRALKTVHPFYMHLP) is leucine-zipper. The tract at residues 214 to 244 (AATSSTAAPPAAPSSGGIAATSSSSAAAAAA) is disordered.

The protein belongs to the HD-ZIP homeobox family. Class II subfamily. In terms of tissue distribution, expressed in stems, leaf sheaths and blades and panicles.

It localises to the nucleus. Functionally, probable transcription factor. This Oryza sativa subsp. indica (Rice) protein is Homeobox-leucine zipper protein HOX11 (HOX11).